The sequence spans 94 residues: Progonadoliberin-3 (94 aa).

An N-terminal signal peptide occupies residues 1–23; sequence MEGKGRVLVQLLMLACVLEVSLC. The residue at position 24 (glutamine 24) is a Pyrrolidone carboxylic acid. Position 33 is a glycine amide (glycine 33).

It belongs to the GnRH family.

The protein resides in the secreted. Functionally, stimulates the secretion of gonadotropins. The polypeptide is Progonadoliberin-3 (gnrh3) (Carassius auratus (Goldfish)).